A 359-amino-acid polypeptide reads, in one-letter code: DNA replication and repair protein RecF (359 aa).

30 to 37 lines the ATP pocket; that stretch reads GPNGSGKT.

The protein belongs to the RecF family.

The protein localises to the cytoplasm. The RecF protein is involved in DNA metabolism; it is required for DNA replication and normal SOS inducibility. RecF binds preferentially to single-stranded, linear DNA. It also seems to bind ATP. The polypeptide is DNA replication and repair protein RecF (Aliivibrio fischeri (strain MJ11) (Vibrio fischeri)).